Reading from the N-terminus, the 59-residue chain is Large ribosomal subunit protein uL30 (59 aa).

It belongs to the universal ribosomal protein uL30 family. In terms of assembly, part of the 50S ribosomal subunit.

The polypeptide is Large ribosomal subunit protein uL30 (Staphylococcus saprophyticus subsp. saprophyticus (strain ATCC 15305 / DSM 20229 / NCIMB 8711 / NCTC 7292 / S-41)).